A 121-amino-acid polypeptide reads, in one-letter code: Large ribosomal subunit protein bL12 (121 aa).

It belongs to the bacterial ribosomal protein bL12 family. Homodimer. Part of the ribosomal stalk of the 50S ribosomal subunit. Forms a multimeric L10(L12)X complex, where L10 forms an elongated spine to which 2 to 4 L12 dimers bind in a sequential fashion. Binds GTP-bound translation factors.

Its function is as follows. Forms part of the ribosomal stalk which helps the ribosome interact with GTP-bound translation factors. Is thus essential for accurate translation. In Clostridioides difficile (strain 630) (Peptoclostridium difficile), this protein is Large ribosomal subunit protein bL12.